A 743-amino-acid chain; its full sequence is Envelope glycoprotein H (743 aa).

The N-terminal stretch at M1–Q23 is a signal peptide. The Virion surface segment spans residues R24–L720. Residues N56, N63, N68, and N193 are each glycosylated (N-linked (GlcNAc...) asparagine; by host). The interval Y218–L281 is interaction with gL. N-linked (GlcNAc...) asparagine; by host glycans are attached at residues N642 and N701. A helical transmembrane segment spans residues M721–K741. At T742 to C743 the chain is on the intravirion side.

This sequence belongs to the herpesviridae glycoprotein H family. In terms of assembly, interacts with glycoprotein L (gL); this interaction is necessary for the correct processing and cell surface expression of gH. The heterodimer gH/gL seems to interact with gB trimers during fusion. Forms the envelope pentamer complex (PC) composed of gH, gL, UL128, UL130, and UL131A. The pentamer interacts with host NRP2. Forms the envelope trimer complex composed of gH, gL, and gO. The trimer interacts with host PDGFRA. The trimer also interacts with host EPHA2. Interacts with UL116. Post-translationally, N-glycosylated, O-glycosylated, and sialylated.

The protein resides in the virion membrane. It localises to the host cell membrane. It is found in the host endosome membrane. Functionally, the heterodimer glycoprotein H-glycoprotein L is required for the fusion of viral and plasma membranes leading to virus entry into the host cell. Following initial binding to host receptor, membrane fusion is mediated by the fusion machinery composed of gB and the heterodimer gH/gL. May also be involved in the fusion between the virion envelope and the outer nuclear membrane during virion morphogenesis. In human cytomegalovirus, forms two distincts complexes to mediate viral entry, a trimer and a pentamer at the surface of the virion envelope. The gH-gL-gO trimer is required for infection in fibroblasts by interacting with host PDGFRA, and in glioblastoma cells by interacting with host EPHA2. The gH-gL-UL128-UL130-UL131A pentamer is essential for viral entry in epithelial, endothelial and myeloid cells via interaction with host NRP2. This Human cytomegalovirus (strain AD169) (HHV-5) protein is Envelope glycoprotein H.